The following is a 141-amino-acid chain: Large ribosomal subunit protein uL11 (141 aa).

This sequence belongs to the universal ribosomal protein uL11 family. Part of the ribosomal stalk of the 50S ribosomal subunit. Interacts with L10 and the large rRNA to form the base of the stalk. L10 forms an elongated spine to which L12 dimers bind in a sequential fashion forming a multimeric L10(L12)X complex. In terms of processing, one or more lysine residues are methylated.

Forms part of the ribosomal stalk which helps the ribosome interact with GTP-bound translation factors. This Crocosphaera subtropica (strain ATCC 51142 / BH68) (Cyanothece sp. (strain ATCC 51142)) protein is Large ribosomal subunit protein uL11.